Consider the following 237-residue polypeptide: Ribose-5-phosphate isomerase A (237 aa).

Substrate contacts are provided by residues 33–36 (TGST), 88–91 (DGAD), and 101–104 (KGRG). Glutamate 110 acts as the Proton acceptor in catalysis. Lysine 128 contacts substrate.

Belongs to the ribose 5-phosphate isomerase family. In terms of assembly, homodimer.

The enzyme catalyses aldehydo-D-ribose 5-phosphate = D-ribulose 5-phosphate. It functions in the pathway carbohydrate degradation; pentose phosphate pathway; D-ribose 5-phosphate from D-ribulose 5-phosphate (non-oxidative stage): step 1/1. In terms of biological role, catalyzes the reversible conversion of ribose-5-phosphate to ribulose 5-phosphate. In Methanoregula boonei (strain DSM 21154 / JCM 14090 / 6A8), this protein is Ribose-5-phosphate isomerase A.